Here is a 252-residue protein sequence, read N- to C-terminus: Serine/threonine phosphatase stp (252 aa).

Residues 1 to 18 (MHAEFRTDRGRIRHHNED) are compositionally biased toward basic and acidic residues. The segment at 1–23 (MHAEFRTDRGRIRHHNEDNGGVF) is disordered. Residues 2-242 (HAEFRTDRGR…DNITVLLVER (241 aa)) form the PPM-type phosphatase domain. Residues Asp36, Gly37, Asp194, and Asp233 each contribute to the Mn(2+) site.

It belongs to the PP2C family. Mn(2+) serves as cofactor.

Its subcellular location is the cytoplasm. The protein resides in the membrane. The enzyme catalyses O-phospho-L-seryl-[protein] + H2O = L-seryl-[protein] + phosphate. It carries out the reaction O-phospho-L-threonyl-[protein] + H2O = L-threonyl-[protein] + phosphate. With respect to regulation, activity not affected by inhibitors of phosphatases of the PPP family such as okadaic acid and cypermethrin, or by inhibitors of phosphatases of the PTP family such as sodium orthovanadate. Its function is as follows. Protein phosphatase that dephosphorylates EF-Tu. The sequence is that of Serine/threonine phosphatase stp (stp) from Listeria monocytogenes serovar 1/2a (strain ATCC BAA-679 / EGD-e).